The chain runs to 132 residues: Large ribosomal subunit protein bL19 (132 aa).

This sequence belongs to the bacterial ribosomal protein bL19 family.

This protein is located at the 30S-50S ribosomal subunit interface and may play a role in the structure and function of the aminoacyl-tRNA binding site. The sequence is that of Large ribosomal subunit protein bL19 from Methylobacterium radiotolerans (strain ATCC 27329 / DSM 1819 / JCM 2831 / NBRC 15690 / NCIMB 10815 / 0-1).